The sequence spans 482 residues: Ribulose bisphosphate carboxylase large chain (482 aa).

Positions Met1–Ser2 are excised as a propeptide. Pro3 is subject to N-acetylproline. N6,N6,N6-trimethyllysine is present on Lys14. Positions 123 and 173 each coordinate substrate. Lys175 functions as the Proton acceptor in the catalytic mechanism. Residue Lys177 participates in substrate binding. 3 residues coordinate Mg(2+): Lys201, Asp203, and Glu204. Lys201 carries the N6-carboxylysine modification. The active-site Proton acceptor is His294. Positions 295, 327, and 379 each coordinate substrate.

The protein belongs to the RuBisCO large chain family. Type I subfamily. In terms of assembly, heterohexadecamer of 8 large chains and 8 small chains; disulfide-linked. The disulfide link is formed within the large subunit homodimers. It depends on Mg(2+) as a cofactor. In terms of processing, the disulfide bond which can form in the large chain dimeric partners within the hexadecamer appears to be associated with oxidative stress and protein turnover.

Its subcellular location is the plastid. It localises to the chloroplast. The enzyme catalyses 2 (2R)-3-phosphoglycerate + 2 H(+) = D-ribulose 1,5-bisphosphate + CO2 + H2O. It catalyses the reaction D-ribulose 1,5-bisphosphate + O2 = 2-phosphoglycolate + (2R)-3-phosphoglycerate + 2 H(+). RuBisCO catalyzes two reactions: the carboxylation of D-ribulose 1,5-bisphosphate, the primary event in carbon dioxide fixation, as well as the oxidative fragmentation of the pentose substrate in the photorespiration process. Both reactions occur simultaneously and in competition at the same active site. This is Ribulose bisphosphate carboxylase large chain from Stegnosperma halimifolium.